We begin with the raw amino-acid sequence, 505 residues long: NADH-quinone oxidoreductase subunit N (505 aa).

Transmembrane regions (helical) follow at residues 20–40 (ALAP…GDLF), 59–79 (ALAL…GGVF), 83–103 (GLAA…ALMS), 115–135 (GEYY…VSAG), 137–157 (AIVL…LVAL), 172–192 (FLMG…LYGL), 220–240 (AVVA…TVPF), 251–271 (APTT…FAVL), 285–305 (LWSD…NIAA), 314–334 (MLAY…AACT), 342–362 (AAYL…IIYL), 394–414 (LAAV…TAGF), 431–451 (ITVV…LGVA), and 481–501 (AVCL…LFWI).

It belongs to the complex I subunit 2 family. As to quaternary structure, NDH-1 is composed of 14 different subunits. Subunits NuoA, H, J, K, L, M, N constitute the membrane sector of the complex.

It localises to the cell inner membrane. It catalyses the reaction a quinone + NADH + 5 H(+)(in) = a quinol + NAD(+) + 4 H(+)(out). Its function is as follows. NDH-1 shuttles electrons from NADH, via FMN and iron-sulfur (Fe-S) centers, to quinones in the respiratory chain. The immediate electron acceptor for the enzyme in this species is believed to be ubiquinone. Couples the redox reaction to proton translocation (for every two electrons transferred, four hydrogen ions are translocated across the cytoplasmic membrane), and thus conserves the redox energy in a proton gradient. The chain is NADH-quinone oxidoreductase subunit N from Desulfovibrio desulfuricans (strain ATCC 27774 / DSM 6949 / MB).